The chain runs to 530 residues: Glucose-6-phosphate isomerase (530 aa).

Glutamate 322 (proton donor) is an active-site residue. Catalysis depends on residues histidine 351 and lysine 455.

The protein belongs to the GPI family.

Its subcellular location is the cytoplasm. It carries out the reaction alpha-D-glucose 6-phosphate = beta-D-fructose 6-phosphate. Its pathway is carbohydrate biosynthesis; gluconeogenesis. It functions in the pathway carbohydrate degradation; glycolysis; D-glyceraldehyde 3-phosphate and glycerone phosphate from D-glucose: step 2/4. In terms of biological role, catalyzes the reversible isomerization of glucose-6-phosphate to fructose-6-phosphate. The sequence is that of Glucose-6-phosphate isomerase from Geotalea daltonii (strain DSM 22248 / JCM 15807 / FRC-32) (Geobacter daltonii).